The chain runs to 89 residues: Putative membrane protein insertion efficiency factor (89 aa).

Residues 68–89 (VPPPNSDARNAPHEAEASSHRL) are disordered. Residues 77 to 89 (NAPHEAEASSHRL) show a composition bias toward basic and acidic residues.

Belongs to the UPF0161 family.

It localises to the cell inner membrane. Functionally, could be involved in insertion of integral membrane proteins into the membrane. The polypeptide is Putative membrane protein insertion efficiency factor (Burkholderia mallei (strain SAVP1)).